Here is a 945-residue protein sequence, read N- to C-terminus: Kinesin-like protein KIN-UA (945 aa).

The interval 1 to 54 (MAANGRASVRPVERHGAPPRPAGRSRSVAPPSRRPSPSPSRARPAAADNDGGSD) is disordered. Over residues 22-31 (AGRSRSVAPP) the composition is skewed to low complexity. Residues 57–399 (RVRVAVRLRP…IMFGQRAMKI (343 aa)) enclose the Kinesin motor domain. Residue 142-149 (GQTGTGKT) participates in ATP binding. Residues 369 to 377 (RTSLIVTIG) carry the D-BOX motif. A coiled-coil region spans residues 415–644 (YKKVEHEVDH…ILRLKQSLAD (230 aa)). ARM repeat units follow at residues 683 to 722 (RSNISKIFEEVGLPNVLALLKSDELEVQIHAVKVVANLAA), 724 to 764 (DVNQ…NLAM), 766 to 806 (GSNQ…NLCG), and 808 to 847 (EKLHVMLKQDGGIKALLGMFRTGHNEVIAQIARGMANFAK).

The protein belongs to the TRAFAC class myosin-kinesin ATPase superfamily. Kinesin family. Ungrouped subfamily.

The protein localises to the cytoplasm. It is found in the cytoskeleton. In Oryza sativa subsp. japonica (Rice), this protein is Kinesin-like protein KIN-UA.